The chain runs to 589 residues: MYRSHTCGELRAEHIGQEVLLAGWVHRRRDHGPLIFIDLRDRYGITQIVFDSADSPVAHAVASDARVEYVLQVRGRVVQRPEEAYNPDIATGMIEVHATEATVLNPAKTPPLYINKEGGEEETLRLKYRYLDLRRERMQRNIMLRHRIVKFIRDFLDREGFVEIETPILIKSTPEGARDYLVPSRLHPGKFYALPQSPQQLKQLLMVAGFDRYFQIARCFRDEDQRADRQPEFTQLDMEMSFVDQGDVLDIIERLFTALCREIVPHKRLVTPFPRLTYAEAMERFGSDKPDLRYGLELVDVSDVVAASSFGVFRAALDTGGQVKGLRIPGAGSYSRKQIDEVVELAKQAGARGLLWAVVPGEGGEVRSSFGRQVSPDEMAAIIRRMEGAPGDLLLIVADPPKIVAQTLDRLRREFGARLNLADPNVLAWAWVIDFPLVEWNEEEQRWDAVHHPFTAPKDEDLHLMDTDPGRVRAKAYDLILNGYEAGGGSIRIHRRDVQQRLFDLLGIDRETAMRQFGHMLEAFEYGAPPHGGIAPGIDRICMILADEVTIREVMAFPKTQQAVDLMTNAPSPVDERQLRELHIALRLD.

Residue Glu175 participates in L-aspartate binding. The tract at residues 199 to 202 is aspartate; it reads QQLK. Arg221 provides a ligand contact to L-aspartate. ATP contacts are provided by residues 221-223 and Gln230; that span reads RDE. His451 contributes to the L-aspartate binding site. Glu485 contacts ATP. Arg492 serves as a coordination point for L-aspartate. ATP is bound at residue 537 to 540; sequence GIDR.

Belongs to the class-II aminoacyl-tRNA synthetase family. Type 1 subfamily. Homodimer.

It is found in the cytoplasm. It catalyses the reaction tRNA(Asx) + L-aspartate + ATP = L-aspartyl-tRNA(Asx) + AMP + diphosphate. Functionally, aspartyl-tRNA synthetase with relaxed tRNA specificity since it is able to aspartylate not only its cognate tRNA(Asp) but also tRNA(Asn). Reaction proceeds in two steps: L-aspartate is first activated by ATP to form Asp-AMP and then transferred to the acceptor end of tRNA(Asp/Asn). This Roseiflexus sp. (strain RS-1) protein is Aspartate--tRNA(Asp/Asn) ligase.